A 599-amino-acid polypeptide reads, in one-letter code: Putative ATP-dependent helicase YeeB (599 aa).

The region spanning 30–207 is the Helicase ATP-binding domain; that stretch reads AFEKRNSQYL…LLPEDEELFD (178 aa). Position 43 to 50 (43 to 50) interacts with ATP; sequence APPASGKS. The DEAH box motif lies at 154–157; the sequence is DEFH. A Helicase C-terminal domain is found at 236–408; it reads QYTSAINEVL…TVNTMLKAIS (173 aa).

It belongs to the helicase family.

The protein is Putative ATP-dependent helicase YeeB (yeeB) of Bacillus subtilis (strain 168).